The sequence spans 459 residues: C-type lectin domain family 14 member A (459 aa).

An N-terminal signal peptide occupies residues Met1 to Gly21. The Extracellular segment spans residues Glu22–Thr386. A C-type lectin domain is found at Ala33–Tyr173. Cys143 and Cys162 are disulfide-bonded. The N-linked (GlcNAc...) asparagine glycan is linked to Asn189. In terms of domain architecture, EGF-like spans Pro246 to Glu288. 3 N-linked (GlcNAc...) asparagine glycosylation sites follow: Asn306, Asn317, and Asn370. Residues Val387–Leu407 form a helical membrane-spanning segment. Residues Gly408–Ala459 lie on the Cytoplasmic side of the membrane. Phosphoserine is present on Ser440.

It localises to the membrane. The polypeptide is C-type lectin domain family 14 member A (Clec14a) (Mus musculus (Mouse)).